We begin with the raw amino-acid sequence, 286 residues long: Pantothenate synthetase (286 aa).

30-37 contacts ATP; the sequence is MGNLHDGH. His-37 acts as the Proton donor in catalysis. A (R)-pantoate-binding site is contributed by Gln-61. A beta-alanine-binding site is contributed by Gln-61. 148-151 is a binding site for ATP; the sequence is GKKD. Gln-154 provides a ligand contact to (R)-pantoate. ATP contacts are provided by residues Val-177 and 185-188; that span reads LSSR.

This sequence belongs to the pantothenate synthetase family. In terms of assembly, homodimer.

Its subcellular location is the cytoplasm. The enzyme catalyses (R)-pantoate + beta-alanine + ATP = (R)-pantothenate + AMP + diphosphate + H(+). Its pathway is cofactor biosynthesis; (R)-pantothenate biosynthesis; (R)-pantothenate from (R)-pantoate and beta-alanine: step 1/1. In terms of biological role, catalyzes the condensation of pantoate with beta-alanine in an ATP-dependent reaction via a pantoyl-adenylate intermediate. This chain is Pantothenate synthetase, found in Psychrobacter sp. (strain PRwf-1).